The following is a 1148-amino-acid chain: Protocadherin-19 (1148 aa).

The first 21 residues, 1-21 (MESLLLPVLLLLAILWTQAAA), serve as a signal peptide directing secretion. Cadherin domains are found at residues 22–129 (LINL…APSF), 130–238 (PAAQ…NPVF), 239–346 (SEST…PPVI), 350–453 (SVNS…HPHF), 454–563 (SKPY…TPVI), and 569–672 (INGT…QESM). At 22–678 (LINLKYSVEE…QESMGSVNLS (657 aa)) the chain is on the extracellular side. Positions 31, 32, 88, and 90 each coordinate Ca(2+). Cys93 and Cys99 are disulfide-bonded. Ca(2+) is bound by residues Asp121, Asn123, Asp124, Asn125, Glu140, Asp155, Asp157, Glu199, Asp212, Asp230, Ser231, Asn232, Asp233, Asn234, and Glu249. Asn261 carries N-linked (GlcNAc...) asparagine glycosylation. Asp264, Asp266, Asn270, Asp305, Glu307, Asp338, Asn340, Asp341, Asn342, Glu360, Asp375, Asp377, Asn381, Asp412, and Glu414 together coordinate Ca(2+). A glycan (N-linked (GlcNAc...) asparagine) is linked at Asn420. The Ca(2+) site is built by Asp427, Asp445, Glu446, Asn447, Asp448, Asn449, Glu464, Asp479, Asp481, Asn485, Asn522, Glu524, and Asp537. Asn485 carries N-linked (GlcNAc...) asparagine glycosylation. The N-linked (GlcNAc...) asparagine glycan is linked to Asn546. Ca(2+)-binding residues include Asp555, Val556, Asn557, Asp558, and Asn559. Residue Asn570 is glycosylated (N-linked (GlcNAc...) asparagine). Asp594, Asp596, Asn600, and Asp646 together coordinate Ca(2+). N-linked (GlcNAc...) asparagine glycosylation occurs at Asn676. Residues 679–699 (LIFIIALGSIAGILFVTMIFV) traverse the membrane as a helical segment. Topologically, residues 700-1148 (AIKCKRDNKE…GVKRLKDIVL (449 aa)) are cytoplasmic. Disordered regions lie at residues 901 to 921 (GNSLKDSGHEESDQTDSEHDV) and 1100 to 1148 (NVNN…DIVL). Basic and acidic residues-rich tracts occupy residues 906 to 921 (DSGHEESDQTDSEHDV), 1109 to 1123 (SEAEPRGADSEKVMH), and 1130 to 1148 (KEGRNKESPGVKRLKDIVL).

As to quaternary structure, homodimer; antiparallel. In terms of tissue distribution, moderately expressed in all regions of the brain examined, with lowest levels found in the cerebellum. Moderate expression is also found in ovary, and low expression in all other tissues tested. Also detected in primary skin fibroblast.

Its subcellular location is the cell membrane. In terms of biological role, calcium-dependent cell-adhesion protein. In Homo sapiens (Human), this protein is Protocadherin-19 (PCDH19).